The chain runs to 402 residues: Phosphopentomutase (402 aa).

6 residues coordinate Mn(2+): Asp10, Asp301, His306, Asp342, His343, and His354.

The protein belongs to the phosphopentomutase family. The cofactor is Mn(2+).

Its subcellular location is the cytoplasm. It carries out the reaction 2-deoxy-alpha-D-ribose 1-phosphate = 2-deoxy-D-ribose 5-phosphate. It catalyses the reaction alpha-D-ribose 1-phosphate = D-ribose 5-phosphate. Its pathway is carbohydrate degradation; 2-deoxy-D-ribose 1-phosphate degradation; D-glyceraldehyde 3-phosphate and acetaldehyde from 2-deoxy-alpha-D-ribose 1-phosphate: step 1/2. Its function is as follows. Isomerase that catalyzes the conversion of deoxy-ribose 1-phosphate (dRib-1-P) and ribose 1-phosphate (Rib-1-P) to deoxy-ribose 5-phosphate (dRib-5-P) and ribose 5-phosphate (Rib-5-P), respectively. The protein is Phosphopentomutase of Aeromonas hydrophila subsp. hydrophila (strain ATCC 7966 / DSM 30187 / BCRC 13018 / CCUG 14551 / JCM 1027 / KCTC 2358 / NCIMB 9240 / NCTC 8049).